Here is a 613-residue protein sequence, read N- to C-terminus: Dihydroxy-acid dehydratase (613 aa).

Asp81 serves as a coordination point for Mg(2+). Cys122 provides a ligand contact to [2Fe-2S] cluster. Positions 123 and 124 each coordinate Mg(2+). Lys124 is modified (N6-carboxylysine). [2Fe-2S] cluster is bound at residue Cys197. Residue Glu493 coordinates Mg(2+). Ser519 (proton acceptor) is an active-site residue.

Belongs to the IlvD/Edd family. Homodimer. The cofactor is [2Fe-2S] cluster. It depends on Mg(2+) as a cofactor.

It catalyses the reaction (2R)-2,3-dihydroxy-3-methylbutanoate = 3-methyl-2-oxobutanoate + H2O. The enzyme catalyses (2R,3R)-2,3-dihydroxy-3-methylpentanoate = (S)-3-methyl-2-oxopentanoate + H2O. Its pathway is amino-acid biosynthesis; L-isoleucine biosynthesis; L-isoleucine from 2-oxobutanoate: step 3/4. The protein operates within amino-acid biosynthesis; L-valine biosynthesis; L-valine from pyruvate: step 3/4. Functions in the biosynthesis of branched-chain amino acids. Catalyzes the dehydration of (2R,3R)-2,3-dihydroxy-3-methylpentanoate (2,3-dihydroxy-3-methylvalerate) into 2-oxo-3-methylpentanoate (2-oxo-3-methylvalerate) and of (2R)-2,3-dihydroxy-3-methylbutanoate (2,3-dihydroxyisovalerate) into 2-oxo-3-methylbutanoate (2-oxoisovalerate), the penultimate precursor to L-isoleucine and L-valine, respectively. This Corynebacterium glutamicum (strain R) protein is Dihydroxy-acid dehydratase.